Reading from the N-terminus, the 102-residue chain is uncharacterized protein (102 aa).

2 consecutive transmembrane segments (helical) span residues 28 to 48 (YLNLLLILEAILCPVDSLISI) and 81 to 101 (LSVLYLDLCCSGLIIAEAGIG).

It localises to the membrane. This is an uncharacterized protein from Saccharomyces cerevisiae (strain ATCC 204508 / S288c) (Baker's yeast).